Consider the following 447-residue polypeptide: Delta(5) fatty acid desaturase fat-4 (447 aa).

The 80-residue stretch at 1–80 (MVLREQEHEP…TQEPEIPDIK (80 aa)) folds into the Cytochrome b5 heme-binding domain. 4 helical membrane-spanning segments follow: residues 137 to 157 (IFTI…PSAI), 257 to 277 (WTFM…IFVS), 292 to 312 (IYEQ…LYFL), and 319 to 339 (IMFF…VVTF).

This sequence belongs to the fatty acid desaturase type 1 family.

The protein localises to the membrane. The enzyme catalyses (11Z,14Z)-eicosadienoyl-CoA + 2 Fe(II)-[cytochrome b5] + O2 + 2 H(+) = (5Z,11Z,14Z)-eicosatrienoyl-CoA + 2 Fe(III)-[cytochrome b5] + 2 H2O. The catalysed reaction is (11Z,14Z,17Z)-eicosatrienoyl-CoA + 2 Fe(II)-[cytochrome b5] + O2 + 2 H(+) = (5Z,11Z,14Z,17Z)-eicosatetraenoyl-CoA + 2 Fe(III)-[cytochrome b5] + 2 H2O. It carries out the reaction (8Z,11Z,14Z,17Z)-eicosatetraenoyl-CoA + 2 Fe(II)-[cytochrome b5] + O2 + 2 H(+) = (5Z,8Z,11Z,14Z,17Z)-eicosapentaenoyl-CoA + 2 Fe(III)-[cytochrome b5] + 2 H2O. It catalyses the reaction (8Z,11Z,14Z)-eicosatrienoyl-CoA + 2 Fe(II)-[cytochrome b5] + O2 + 2 H(+) = (5Z,8Z,11Z,14Z)-eicosatetraenoyl-CoA + 2 Fe(III)-[cytochrome b5] + 2 H2O. It participates in lipid metabolism; polyunsaturated fatty acid biosynthesis. In terms of biological role, can function as a Delta(5) fatty acid desaturase and behaves as a (8-3) desaturase. Introduces a double bond in the fatty acid chain 5 carbons away from carboxy terminal to biosynthesize polyunsaturated fatty acids (PUFAs) endogenously (PUFAs are essential for membrane structure and many cellular and physiological processes). Acts on a variety of substrates such as dihomo-gamma-linoleoyl-CoA ((8Z,11Z,14Z)-eicosatrienoyl-CoA, 20:3n-6) to generate arachidonoyl-CoA ((5Z,8Z,11Z,14Z)-eicosatetraenoyl-CoA, 20:4n-6). Also acts on a number of other substrates, including fatty acids that do not contain a double bond at the 8 position like (11Z,14Z,17Z)-eicosatrienoyl-CoA (20:3n-3) to produce (5Z,11Z,14Z,17Z)-eicosatetraenoyl-CoA (20:4n-3). Unlike plants, Caenorhabditis elegans desaturases seem to use fatty acyl-CoAs as substrates. This chain is Delta(5) fatty acid desaturase fat-4 (fat-4), found in Caenorhabditis elegans.